We begin with the raw amino-acid sequence, 549 residues long: Glucose-6-phosphate isomerase (549 aa).

Catalysis depends on E355, which acts as the Proton donor. Residues H386 and K514 contribute to the active site.

The protein belongs to the GPI family.

Its subcellular location is the cytoplasm. The catalysed reaction is alpha-D-glucose 6-phosphate = beta-D-fructose 6-phosphate. The protein operates within carbohydrate biosynthesis; gluconeogenesis. Its pathway is carbohydrate degradation; glycolysis; D-glyceraldehyde 3-phosphate and glycerone phosphate from D-glucose: step 2/4. Catalyzes the reversible isomerization of glucose-6-phosphate to fructose-6-phosphate. The protein is Glucose-6-phosphate isomerase of Pectobacterium carotovorum subsp. carotovorum (strain PC1).